The primary structure comprises 686 residues: Secretin GspD 2 (686 aa).

Residues 1–40 (MFWRDITLSVWRKKTTGLKTKKRLLPLVLAAALCSSPVWA) form the signal peptide. The tract at residues 41–140 (EEATFTANFK…VGEGSDNYAG (100 aa)) is N0, contacts GspC2. Residues 142–206 (EMVTKVVPVR…EVIQRVDHAG (65 aa)) are N1. An N2 region spans residues 207 to 279 (NRTEEVIPLD…LIRRLDSEME (73 aa)). Residues 282-357 (GNSQVFYLKY…SLQSVIEQLD (76 aa)) form an N3 region. The tract at residues 360–627 (RAQVHVEALI…VFIRPTILRD (268 aa)) is secretin. Residues 414 to 433 (PQKGSTVISENGATTINPDT) form a cap gate region. The segment at 629-686 (MAADGVSQRKYNYMRAEQIYRDEQGLSLMPHTAQPVLPAQNQALPPEVRAFLNAGRTR) is s domain, contacts AspS2.

The protein belongs to the bacterial secretin family. GSP D subfamily. Forms a cylindrical channel with 15 subunits, each of which interacts with the surrounding pilotin AspS2 proteins (also called GspS-beta). Interacts with inner cell membrane protein GspC2 in the periplasm. Forms multimers in the outer membrane. The isolated N0 domain forms dimers that self-assemble into rings.

Its subcellular location is the cell outer membrane. Its function is as follows. Part of a type II secretion system (T2SS, formerly general secretion pathway, GSP) for the export of folded proteins across the outer membrane. This subunit forms the outer membrane channel. The sequence is that of Secretin GspD 2 (gspD2) from Escherichia coli O78:H11 (strain H10407 / ETEC).